Consider the following 229-residue polypeptide: NAD(P)H-hydrate epimerase (229 aa).

Residues 10 to 217 (AINVDLELFN…ALQRKYELNL (208 aa)) form the YjeF N-terminal domain. 60-64 (NNGGD) provides a ligand contact to (6S)-NADPHX. K(+) is bound by residues Asn61 and Asp125. (6S)-NADPHX is bound by residues 129 to 135 (GFSFKPP) and Asp158. K(+) is bound at residue Ser161.

This sequence belongs to the NnrE/AIBP family. K(+) is required as a cofactor.

The catalysed reaction is (6R)-NADHX = (6S)-NADHX. The enzyme catalyses (6R)-NADPHX = (6S)-NADPHX. Its function is as follows. Catalyzes the epimerization of the S- and R-forms of NAD(P)HX, a damaged form of NAD(P)H that is a result of enzymatic or heat-dependent hydration. This is a prerequisite for the S-specific NAD(P)H-hydrate dehydratase to allow the repair of both epimers of NAD(P)HX. The polypeptide is NAD(P)H-hydrate epimerase (Drosophila virilis (Fruit fly)).